The primary structure comprises 453 residues: Aldehyde dehydrogenase, dimeric NADP-preferring (453 aa).

The residue at position 2 (S2) is an N-acetylserine. Residue K178 is modified to N6-acetyllysine. NAD(+) is bound at residue 188–193; sequence GSTAVG. K194 is modified (N6-acetyllysine). Active-site residues include E210 and C244.

It belongs to the aldehyde dehydrogenase family. As to quaternary structure, homodimer. Constitutively expressed in cornea, stomach, skin, bladder and lungs. Lowest expression levels in lungs and bladder.

It localises to the cytoplasm. The catalysed reaction is an aldehyde + NAD(+) + H2O = a carboxylate + NADH + 2 H(+). The enzyme catalyses octanal + NAD(+) + H2O = octanoate + NADH + 2 H(+). In terms of biological role, ALDHs play a major role in the detoxification of alcohol-derived acetaldehyde. They are involved in the metabolism of corticosteroids, biogenic amines, neurotransmitters, and lipid peroxidation. Oxidizes medium and long chain aldehydes into non-toxic fatty acids. Preferentially oxidizes aromatic aldehyde substrates. Comprises about 50 percent of corneal epithelial soluble proteins. May play a role in preventing corneal damage caused by ultraviolet light. The protein is Aldehyde dehydrogenase, dimeric NADP-preferring (Aldh3a1) of Mus musculus (Mouse).